A 491-amino-acid chain; its full sequence is Glycogen synthase 1 (491 aa).

Lys15 contacts ADP-alpha-D-glucose.

This sequence belongs to the glycosyltransferase 1 family. Bacterial/plant glycogen synthase subfamily.

It catalyses the reaction [(1-&gt;4)-alpha-D-glucosyl](n) + ADP-alpha-D-glucose = [(1-&gt;4)-alpha-D-glucosyl](n+1) + ADP + H(+). The protein operates within glycan biosynthesis; glycogen biosynthesis. Synthesizes alpha-1,4-glucan chains using ADP-glucose. This chain is Glycogen synthase 1, found in Synechococcus sp. (strain JA-2-3B'a(2-13)) (Cyanobacteria bacterium Yellowstone B-Prime).